The primary structure comprises 153 residues: D-aminoacyl-tRNA deacylase (153 aa).

A Gly-cisPro motif, important for rejection of L-amino acids motif is present at residues G137 to P138.

It belongs to the DTD family. In terms of assembly, homodimer.

Its subcellular location is the cytoplasm. It catalyses the reaction glycyl-tRNA(Ala) + H2O = tRNA(Ala) + glycine + H(+). The enzyme catalyses a D-aminoacyl-tRNA + H2O = a tRNA + a D-alpha-amino acid + H(+). Its function is as follows. An aminoacyl-tRNA editing enzyme that deacylates mischarged D-aminoacyl-tRNAs. Also deacylates mischarged glycyl-tRNA(Ala), protecting cells against glycine mischarging by AlaRS. Acts via tRNA-based rather than protein-based catalysis; rejects L-amino acids rather than detecting D-amino acids in the active site. By recycling D-aminoacyl-tRNA to D-amino acids and free tRNA molecules, this enzyme counteracts the toxicity associated with the formation of D-aminoacyl-tRNA entities in vivo and helps enforce protein L-homochirality. This Dehalococcoides mccartyi (strain ATCC BAA-2266 / KCTC 15142 / 195) (Dehalococcoides ethenogenes (strain 195)) protein is D-aminoacyl-tRNA deacylase.